The chain runs to 316 residues: Probable porphobilinogen deaminase (316 aa).

Cysteine 234 bears the S-(dipyrrolylmethanemethyl)cysteine mark.

Belongs to the HMBS family. Dipyrromethane serves as cofactor.

It carries out the reaction 4 porphobilinogen + H2O = hydroxymethylbilane + 4 NH4(+). It functions in the pathway porphyrin-containing compound metabolism; protoporphyrin-IX biosynthesis; coproporphyrinogen-III from 5-aminolevulinate: step 2/4. Its function is as follows. Tetrapolymerization of the monopyrrole PBG into the hydroxymethylbilane pre-uroporphyrinogen in several discrete steps. This Methanosarcina barkeri (strain Fusaro / DSM 804) protein is Probable porphobilinogen deaminase.